Reading from the N-terminus, the 270-residue chain is Phosphatidylglycerol--prolipoprotein diacylglyceryl transferase (270 aa).

The next 7 membrane-spanning stretches (helical) occupy residues 14 to 34 (VAFTLFGFSVHWYGIMYILAL), 60 to 80 (YFFWVEIGVILGARLGYIAIY), 103 to 123 (FVGIRGMSYHGAVVGFLLATI), 133 to 153 (LWQLLDLCALCIPFGYIFGRI), 181 to 201 (PSQLYEAALEGLAVFLILFFY), 209 to 229 (GELIALYAVLYTLARFVCEFF), and 235 to 255 (GIGFIIFGLSMGQILSILMFF). A 1,2-diacyl-sn-glycero-3-phospho-(1'-sn-glycerol) is bound at residue arginine 152.

This sequence belongs to the Lgt family.

The protein resides in the cell inner membrane. It catalyses the reaction L-cysteinyl-[prolipoprotein] + a 1,2-diacyl-sn-glycero-3-phospho-(1'-sn-glycerol) = an S-1,2-diacyl-sn-glyceryl-L-cysteinyl-[prolipoprotein] + sn-glycerol 1-phosphate + H(+). It participates in protein modification; lipoprotein biosynthesis (diacylglyceryl transfer). Its function is as follows. Catalyzes the transfer of the diacylglyceryl group from phosphatidylglycerol to the sulfhydryl group of the N-terminal cysteine of a prolipoprotein, the first step in the formation of mature lipoproteins. The chain is Phosphatidylglycerol--prolipoprotein diacylglyceryl transferase from Campylobacter curvus (strain 525.92).